Reading from the N-terminus, the 363-residue chain is 3-dehydroquinate synthase (363 aa).

NAD(+) is bound by residues 72–77 (SGEKEK), 130–131 (TT), lysine 142, and lysine 151. Positions 184, 247, and 264 each coordinate Zn(2+).

Belongs to the sugar phosphate cyclases superfamily. Dehydroquinate synthase family. Co(2+) serves as cofactor. It depends on Zn(2+) as a cofactor. NAD(+) is required as a cofactor.

It is found in the cytoplasm. It catalyses the reaction 7-phospho-2-dehydro-3-deoxy-D-arabino-heptonate = 3-dehydroquinate + phosphate. It functions in the pathway metabolic intermediate biosynthesis; chorismate biosynthesis; chorismate from D-erythrose 4-phosphate and phosphoenolpyruvate: step 2/7. Its function is as follows. Catalyzes the conversion of 3-deoxy-D-arabino-heptulosonate 7-phosphate (DAHP) to dehydroquinate (DHQ). The protein is 3-dehydroquinate synthase of Bacillus thuringiensis subsp. konkukian (strain 97-27).